Reading from the N-terminus, the 423-residue chain is COP9 signalosome complex subunit 3 (423 aa).

Residues 197–365 (NFERALYFYE…GMVCFHDNPE (169 aa)) form the PCI domain. Residues 402 to 423 (QFVQKSMGSQEDDSGTKPSSYS) are disordered.

The protein belongs to the CSN3 family. As to quaternary structure, component of the CSN complex, probably composed of COPS1, COPS2, COPS3, COPS4, COPS5, COPS6, COPS7, COPS8 and COPS9.

The protein localises to the cytoplasm. Its subcellular location is the nucleus. Functionally, component of the COP9 signalosome complex (CSN), a complex involved in various cellular and developmental processes. The CSN complex is an essential regulator of the ubiquitin (Ubl) conjugation pathway by mediating the deneddylation of the cullin subunits of E3 ligase complexes, leading to modify the Ubl ligase activity. The polypeptide is COP9 signalosome complex subunit 3 (COPS3) (Gallus gallus (Chicken)).